The chain runs to 342 residues: Phosphate acyltransferase (342 aa).

The protein belongs to the PlsX family. Homodimer. Probably interacts with PlsY.

It localises to the cytoplasm. It carries out the reaction a fatty acyl-[ACP] + phosphate = an acyl phosphate + holo-[ACP]. It participates in lipid metabolism; phospholipid metabolism. Catalyzes the reversible formation of acyl-phosphate (acyl-PO(4)) from acyl-[acyl-carrier-protein] (acyl-ACP). This enzyme utilizes acyl-ACP as fatty acyl donor, but not acyl-CoA. In Actinobacillus succinogenes (strain ATCC 55618 / DSM 22257 / CCUG 43843 / 130Z), this protein is Phosphate acyltransferase.